A 670-amino-acid polypeptide reads, in one-letter code: DNA ligase (670 aa).

NAD(+) is bound by residues 32 to 36 (DAEYD), 81 to 82 (SL), and Glu113. The N6-AMP-lysine intermediate role is filled by Lys115. 4 residues coordinate NAD(+): Arg136, Glu173, Lys290, and Lys314. Zn(2+) contacts are provided by Cys408, Cys411, Cys426, and Cys432. The BRCT domain maps to 592 to 670 (EIDSPFAGKT…EAEMIRLLGE (79 aa)).

This sequence belongs to the NAD-dependent DNA ligase family. LigA subfamily. Mg(2+) serves as cofactor. Requires Mn(2+) as cofactor.

The catalysed reaction is NAD(+) + (deoxyribonucleotide)n-3'-hydroxyl + 5'-phospho-(deoxyribonucleotide)m = (deoxyribonucleotide)n+m + AMP + beta-nicotinamide D-nucleotide.. DNA ligase that catalyzes the formation of phosphodiester linkages between 5'-phosphoryl and 3'-hydroxyl groups in double-stranded DNA using NAD as a coenzyme and as the energy source for the reaction. It is essential for DNA replication and repair of damaged DNA. In Yersinia pseudotuberculosis serotype O:1b (strain IP 31758), this protein is DNA ligase.